A 333-amino-acid chain; its full sequence is Torsin-1A (333 aa).

The first 20 residues, 1–20 (MKLGRAALALLLLAPCVVRA), serve as a signal peptide directing secretion. The interaction with SNAPIN stretch occupies residues 92-252 (KPKKPLTLSL…VSVFNNKNSG (161 aa)). 103-110 (GWTGTGKN) contacts ATP. Asn144 and Asn159 each carry an N-linked (GlcNAc...) asparagine glycan. Positions 252–333 (GFWHSSLIDR…FTKLDYYLDD (82 aa)) are interaction with KLC1. The segment at 313–333 (KVFSDKGCKTVFTKLDYYLDD) is interaction with SYNE3.

Belongs to the ClpA/ClpB family. Torsin subfamily. In terms of assembly, homohexamer. Interacts with TOR1B; the interaction may be specific of neural tissues. Interacts (ATP-bound) with TOR1AIP1 and TOR1AIP2; the interactions induce ATPase activity. Interacts with KLHL14; preferentially when ATP-free. Interacts with KLC1 (via TPR repeats); the interaction associates TOR1A with the kinesin oligomeric complex. Interacts with COPS4; the interaction associates TOR1A with the CSN complex. Interacts with SNAPIN; the interaction is direct and associates SNAPIN with the CSN complex. Interacts with STON2. Interacts (ATP-bound) with SYNE3 (via KASH domain); the interaction is required for SYNE3 nuclear envelope localization. Interacts with VIM; the interaction associates TOR1A with the cytoskeleton. Interacts with PLEC. Interacts (ATP-bound) with SLC6A3; regulates SLC6A3 transport to the plasma membrane. N-glycosylated. In terms of tissue distribution, widely expressed (at protein level).

Its subcellular location is the endoplasmic reticulum lumen. The protein localises to the nucleus membrane. The protein resides in the cell projection. It is found in the growth cone. It localises to the cytoplasmic vesicle membrane. Its subcellular location is the synapse. The protein localises to the synaptosome. The protein resides in the cytoplasm. It is found in the cytoskeleton. It localises to the cytoplasmic vesicle. Its subcellular location is the secretory vesicle. The protein localises to the synaptic vesicle. The catalysed reaction is ATP + H2O = ADP + phosphate + H(+). Protein with chaperone functions important for the control of protein folding, processing, stability and localization as well as for the reduction of misfolded protein aggregates. Involved in the regulation of synaptic vesicle recycling, controls STON2 protein stability in collaboration with the COP9 signalosome complex (CSN). In the nucleus, may link the cytoskeleton with the nuclear envelope, this mechanism seems to be crucial for the control of nuclear polarity, cell movement and, specifically in neurons, nuclear envelope integrity. Participates in the cellular trafficking and may regulate the subcellular location of multipass membrane proteins such as the dopamine transporter SLC6A3, leading to the modulation of dopamine neurotransmission. In the endoplasmic reticulum, plays a role in the quality control of protein folding by increasing clearance of misfolded proteins such as SGCE variants or holding them in an intermediate state for proper refolding. May have a redundant function with TOR1B in non-neural tissues. In Mus musculus (Mouse), this protein is Torsin-1A (Tor1a).